A 389-amino-acid polypeptide reads, in one-letter code: Tubby-like F-box protein 11 (389 aa).

Positions 36-82 (DYRWSEIPEELLREILIRVEAADGGGWPSRRSVVACAGVCRGWRLLM) constitute an F-box domain. Residues 250–289 (STMEPQGVASEPSEFPLLGTRSTLSRSQSKPLRSSSSHLK) form a disordered region. The segment covering 273–286 (LSRSQSKPLRSSSS) has biased composition (low complexity).

The protein belongs to the TUB family. Ubiquitous.

In Arabidopsis thaliana (Mouse-ear cress), this protein is Tubby-like F-box protein 11.